The chain runs to 248 residues: Positive alginate biosynthesis regulatory protein (248 aa).

The Response regulatory domain maps to 2–117; sequence NVLIVDDEPL…DLAEALKKAS (116 aa). Asp-54 bears the 4-aspartylphosphate mark. In terms of domain architecture, HTH LytTR-type spans 142–247; sequence ISARTRKGIE…VAGVRRLMHQ (106 aa).

It participates in glycan biosynthesis; alginate biosynthesis [regulation]. Functionally, positive regulator of the algD gene, which codes for a GDP-mannose dehydrogenase, a key step enzyme in the alginate biosynthesis pathway. The polypeptide is Positive alginate biosynthesis regulatory protein (algR) (Pseudomonas aeruginosa (strain ATCC 15692 / DSM 22644 / CIP 104116 / JCM 14847 / LMG 12228 / 1C / PRS 101 / PAO1)).